A 1269-amino-acid polypeptide reads, in one-letter code: DNA-directed RNA polymerase subunit beta (1269 aa).

Belongs to the RNA polymerase beta chain family. The RNAP catalytic core consists of 2 alpha, 1 beta, 1 beta' and 1 omega subunit. When a sigma factor is associated with the core the holoenzyme is formed, which can initiate transcription.

It catalyses the reaction RNA(n) + a ribonucleoside 5'-triphosphate = RNA(n+1) + diphosphate. Its function is as follows. DNA-dependent RNA polymerase catalyzes the transcription of DNA into RNA using the four ribonucleoside triphosphates as substrates. This is DNA-directed RNA polymerase subunit beta from Porphyromonas gingivalis (strain ATCC 33277 / DSM 20709 / CIP 103683 / JCM 12257 / NCTC 11834 / 2561).